The sequence spans 236 residues: Pyridoxine 5'-phosphate synthase (236 aa).

Asn-6 is a binding site for 3-amino-2-oxopropyl phosphate. Position 8–9 (8–9 (DH)) interacts with 1-deoxy-D-xylulose 5-phosphate. Arg-17 provides a ligand contact to 3-amino-2-oxopropyl phosphate. His-42 functions as the Proton acceptor in the catalytic mechanism. 1-deoxy-D-xylulose 5-phosphate is bound by residues Arg-44 and His-49. Catalysis depends on Glu-69, which acts as the Proton acceptor. Position 99 (Thr-99) interacts with 1-deoxy-D-xylulose 5-phosphate. His-190 serves as the catalytic Proton donor. 3-amino-2-oxopropyl phosphate is bound by residues Gly-191 and 212–213 (GH).

This sequence belongs to the PNP synthase family. In terms of assembly, homooctamer; tetramer of dimers.

Its subcellular location is the cytoplasm. The catalysed reaction is 3-amino-2-oxopropyl phosphate + 1-deoxy-D-xylulose 5-phosphate = pyridoxine 5'-phosphate + phosphate + 2 H2O + H(+). The protein operates within cofactor biosynthesis; pyridoxine 5'-phosphate biosynthesis; pyridoxine 5'-phosphate from D-erythrose 4-phosphate: step 5/5. Functionally, catalyzes the complicated ring closure reaction between the two acyclic compounds 1-deoxy-D-xylulose-5-phosphate (DXP) and 3-amino-2-oxopropyl phosphate (1-amino-acetone-3-phosphate or AAP) to form pyridoxine 5'-phosphate (PNP) and inorganic phosphate. The chain is Pyridoxine 5'-phosphate synthase from Prosthecochloris aestuarii (strain DSM 271 / SK 413).